Consider the following 156-residue polypeptide: Small ribosomal subunit protein uS7 (156 aa).

Belongs to the universal ribosomal protein uS7 family. As to quaternary structure, part of the 30S ribosomal subunit. Contacts proteins S9 and S11.

In terms of biological role, one of the primary rRNA binding proteins, it binds directly to 16S rRNA where it nucleates assembly of the head domain of the 30S subunit. Is located at the subunit interface close to the decoding center, probably blocks exit of the E-site tRNA. The protein is Small ribosomal subunit protein uS7 of Geobacillus sp. (strain WCH70).